Reading from the N-terminus, the 232-residue chain is LexA repressor (232 aa).

The segment at residues 26-46 (FDEMKDALDLRSKSGIHRLIT) is a DNA-binding region (H-T-H motif). Catalysis depends on for autocatalytic cleavage activity residues Ser-153 and Lys-191.

Belongs to the peptidase S24 family. Homodimer.

It carries out the reaction Hydrolysis of Ala-|-Gly bond in repressor LexA.. Its function is as follows. Represses a number of genes involved in the response to DNA damage (SOS response), including recA and lexA. In the presence of single-stranded DNA, RecA interacts with LexA causing an autocatalytic cleavage which disrupts the DNA-binding part of LexA, leading to derepression of the SOS regulon and eventually DNA repair. The sequence is that of LexA repressor from Bradyrhizobium sp. (strain BTAi1 / ATCC BAA-1182).